The sequence spans 279 residues: Thymidylate synthase (279 aa).

DUMP is bound at residue Arg37. A (6R)-5,10-methylene-5,6,7,8-tetrahydrofolate-binding site is contributed by His67. 142-143 contacts dUMP; it reads RR. The active-site Nucleophile is Cys162. DUMP is bound by residues 182–185, Asn193, and 223–225; these read RSAD and HLY. Asp185 provides a ligand contact to (6R)-5,10-methylene-5,6,7,8-tetrahydrofolate. Ser278 is a (6R)-5,10-methylene-5,6,7,8-tetrahydrofolate binding site.

It belongs to the thymidylate synthase family. Bacterial-type ThyA subfamily. As to quaternary structure, homodimer.

It is found in the cytoplasm. It catalyses the reaction dUMP + (6R)-5,10-methylene-5,6,7,8-tetrahydrofolate = 7,8-dihydrofolate + dTMP. It participates in pyrimidine metabolism; dTTP biosynthesis. Functionally, catalyzes the reductive methylation of 2'-deoxyuridine-5'-monophosphate (dUMP) to 2'-deoxythymidine-5'-monophosphate (dTMP) while utilizing 5,10-methylenetetrahydrofolate (mTHF) as the methyl donor and reductant in the reaction, yielding dihydrofolate (DHF) as a by-product. This enzymatic reaction provides an intracellular de novo source of dTMP, an essential precursor for DNA biosynthesis. This is Thymidylate synthase from Caulobacter vibrioides (strain ATCC 19089 / CIP 103742 / CB 15) (Caulobacter crescentus).